An 807-amino-acid chain; its full sequence is Hyaluronate lyase (807 aa).

A signal peptide spans 1–40 (MTYRIKKWQKLSTITLLMAGVITLNGGEFRSVDKHQIAVA). Catalysis depends on residues Asn-241, His-297, and Tyr-306.

Belongs to the polysaccharide lyase 8 family.

It localises to the secreted. It catalyses the reaction [hyaluronan](n) = n 3-(4-deoxy-beta-D-gluc-4-enuronosyl)-N-acetyl-D-glucosamine + H2O. This is Hyaluronate lyase from Staphylococcus aureus (strain NCTC 8325 / PS 47).